Consider the following 872-residue polypeptide: Cadherin-1 (872 aa).

The first 25 residues, 1–25 (MGLKRPWLLGAVVLLTLIQVQGGLA), serve as a signal peptide directing secretion. A propeptide spanning residues 26–148 (EWTQCRMGFS…SETGLKRQKR (123 aa)) is cleaved from the precursor. 5 Cadherin domains span residues 148–256 (RDWV…DPVF), 257–370 (TQSV…PPVF), 371–481 (DPTQ…APIF), 482–589 (LPPV…GPFL), and 605–688 (VFTI…MQCE). Residues 149–701 (DWVIPPIIVS…AIAGGLGISA (553 aa)) are Extracellular-facing. N-linked (GlcNAc...) asparagine glycosylation occurs at asparagine 209. Positions 251 and 282 each coordinate Ca(2+). Asparagine 456, asparagine 552, asparagine 631, and asparagine 669 each carry an N-linked (GlcNAc...) asparagine glycan. Residues 702 to 722 (IVGILGGILALLLLLLLLLLF) traverse the membrane as a helical segment. At 723–872 (VRRKKVVKEP…LADMYGGDED (150 aa)) the chain is on the cytoplasmic side. The segment at 739–758 (ETRDNVFSYDEEGGGEEDQD) is disordered. Over residues 747-758 (YDEEGGGEEDQD) the composition is skewed to acidic residues.

Homodimer. Abundantly expressed in intestine, stomach, liver, kidney, skin and eye. Also expressed in heart, lung, testis, ovary, muscle and brain.

It is found in the cell junction. The protein resides in the adherens junction. It localises to the cell membrane. Its subcellular location is the endosome. The protein localises to the golgi apparatus. It is found in the trans-Golgi network. The protein resides in the cytoplasm. It localises to the desmosome. Functionally, cadherins are calcium-dependent cell adhesion proteins. They preferentially interact with themselves in a homophilic manner in connecting cells; cadherins may thus contribute to the sorting of heterogeneous cell types. Promotes organization of radial actin fiber structure and cellular response to contractile forces, via anchoring of radial actin fibers to CDH1 junction complexes at the cell membrane. E-cadherin is a ligand for integrin alpha-E/beta-7. In Xenopus laevis (African clawed frog), this protein is Cadherin-1 (cdh1).